A 251-amino-acid polypeptide reads, in one-letter code: 3-deoxy-manno-octulosonate cytidylyltransferase (251 aa).

This sequence belongs to the KdsB family.

It is found in the cytoplasm. It carries out the reaction 3-deoxy-alpha-D-manno-oct-2-ulosonate + CTP = CMP-3-deoxy-beta-D-manno-octulosonate + diphosphate. It participates in nucleotide-sugar biosynthesis; CMP-3-deoxy-D-manno-octulosonate biosynthesis; CMP-3-deoxy-D-manno-octulosonate from 3-deoxy-D-manno-octulosonate and CTP: step 1/1. It functions in the pathway bacterial outer membrane biogenesis; lipopolysaccharide biosynthesis. Its function is as follows. Activates KDO (a required 8-carbon sugar) for incorporation into bacterial lipopolysaccharide in Gram-negative bacteria. The chain is 3-deoxy-manno-octulosonate cytidylyltransferase from Chromobacterium violaceum (strain ATCC 12472 / DSM 30191 / JCM 1249 / CCUG 213 / NBRC 12614 / NCIMB 9131 / NCTC 9757 / MK).